The following is a 347-amino-acid chain: Olfactory receptor 13C3 (347 aa).

At 1–55 the chain is on the extracellular side; that stretch reads MIVQLICTVCFLAVNTFHVRSSFDFLKADDMGEINQTLVSEFLLLGLSGYPKIEI. Asn-35 is a glycosylation site (N-linked (GlcNAc...) asparagine). The helical transmembrane segment at 56–76 threads the bilayer; the sequence is VYFALILVMYLVILIGNGVLI. At 77-84 the chain is on the cytoplasmic side; that stretch reads IASIFDSH. A helical membrane pass occupies residues 85-105; it reads FHTPMYFFLGNLSFLDICYTS. Residues 106-129 lie on the Extracellular side of the membrane; sequence SSVPSTLVSLISKKRNISFSGCAV. Cysteines 127 and 219 form a disulfide. Residues 130-150 traverse the membrane as a helical segment; that stretch reads QMFFGFAMGSTECLLLGMMAF. The Cytoplasmic segment spans residues 151-169; that stretch reads DRYVAICNPLRYPIILSKV. Residues 170–190 traverse the membrane as a helical segment; it reads AYVLMASVSWLSGGINSAVQT. At 191–227 the chain is on the extracellular side; that stretch reads LLAMRLPFCGNNIINHFACEILAVLKLACADISLNII. Residues 228 to 247 traverse the membrane as a helical segment; sequence TMVISNMAFLVLPLMVIFFS. Over 248–267 the chain is Cytoplasmic; sequence YMFILYTILQMNSATGRRKA. A helical transmembrane segment spans residues 268 to 288; sequence FSTCSAHLTVVIIFYGTIFFM. At 289-307 the chain is on the extracellular side; that stretch reads YAKPKSQDLIGEEKLQALD. The helical transmembrane segment at 308 to 328 threads the bilayer; the sequence is KLISLFYGVVTPMLNPILYSL. At 329 to 347 the chain is on the cytoplasmic side; the sequence is RNKDVKAAVKYLLNKKPIH.

It belongs to the G-protein coupled receptor 1 family.

It localises to the cell membrane. In terms of biological role, odorant receptor. In Homo sapiens (Human), this protein is Olfactory receptor 13C3 (OR13C3).